We begin with the raw amino-acid sequence, 169 residues long: Ureidoglycolate lyase (169 aa).

Belongs to the ureidoglycolate lyase family. Homodimer. Ni(2+) is required as a cofactor.

It carries out the reaction (S)-ureidoglycolate = urea + glyoxylate. It functions in the pathway nitrogen metabolism; (S)-allantoin degradation. Functionally, catalyzes the catabolism of the allantoin degradation intermediate (S)-ureidoglycolate, generating urea and glyoxylate. Involved in the utilization of allantoin as nitrogen source. The protein is Ureidoglycolate lyase of Brucella melitensis biotype 2 (strain ATCC 23457).